Here is a 60-residue protein sequence, read N- to C-terminus: MAVQQNRKTRSRRGMRRSHDALTGKTLSVDSTTGEKHLRHHVTPDGFYKGRKVVDVADDE.

The disordered stretch occupies residues 1 to 43 (MAVQQNRKTRSRRGMRRSHDALTGKTLSVDSTTGEKHLRHHVT). Residues 7–16 (RKTRSRRGMR) show a composition bias toward basic residues.

The protein belongs to the bacterial ribosomal protein bL32 family.

The sequence is that of Large ribosomal subunit protein bL32 from Saccharophagus degradans (strain 2-40 / ATCC 43961 / DSM 17024).